Reading from the N-terminus, the 968-residue chain is RNA polymerase-associated protein RapA (968 aa).

The region spanning 164-334 (DVGRRHAPRV…FARLRLLDPN (171 aa)) is the Helicase ATP-binding domain. Residue 177-184 (DEVGLGKT) coordinates ATP. Residues 280–283 (DEAH) carry the DEAH box motif. The Helicase C-terminal domain occupies 490–662 (RVEWLMGYLT…YLASPDQTEG (173 aa)).

Belongs to the SNF2/RAD54 helicase family. RapA subfamily. As to quaternary structure, interacts with the RNAP. Has a higher affinity for the core RNAP than for the holoenzyme. Its ATPase activity is stimulated by binding to RNAP.

In terms of biological role, transcription regulator that activates transcription by stimulating RNA polymerase (RNAP) recycling in case of stress conditions such as supercoiled DNA or high salt concentrations. Probably acts by releasing the RNAP, when it is trapped or immobilized on tightly supercoiled DNA. Does not activate transcription on linear DNA. Probably not involved in DNA repair. In Escherichia coli O1:K1 / APEC, this protein is RNA polymerase-associated protein RapA.